Here is a 377-residue protein sequence, read N- to C-terminus: GTPase Obg (377 aa).

The Obg domain occupies 1–159; sequence MKFVDEATIE…RRLRMELKVL (159 aa). Positions 127 to 148 are disordered; sequence NIHFKSSTNRAPRQWTPGKEGE. The 177-residue stretch at 160 to 336 folds into the OBG-type G domain; that stretch reads ADVGLLGLPN…LIWALQDYLD (177 aa). GTP contacts are provided by residues 166 to 173, 191 to 195, 213 to 216, 288 to 291, and 317 to 319; these read GLPNAGKS, FTTLH, DIPG, NKLD, and SGL. Positions 173 and 193 each coordinate Mg(2+). The tract at residues 339–377 is disordered; sequence KRKDQDAQDQADGTYVFEDPRFDASRGGAAPATPPGGDE.

The protein belongs to the TRAFAC class OBG-HflX-like GTPase superfamily. OBG GTPase family. In terms of assembly, monomer. Requires Mg(2+) as cofactor.

Its subcellular location is the cytoplasm. Functionally, an essential GTPase which binds GTP, GDP and possibly (p)ppGpp with moderate affinity, with high nucleotide exchange rates and a fairly low GTP hydrolysis rate. Plays a role in control of the cell cycle, stress response, ribosome biogenesis and in those bacteria that undergo differentiation, in morphogenesis control. This is GTPase Obg from Bordetella bronchiseptica (strain ATCC BAA-588 / NCTC 13252 / RB50) (Alcaligenes bronchisepticus).